Consider the following 868-residue polypeptide: Ionotropic receptor 93a (868 aa).

A signal peptide spans 1-28 (MNPGEMRPSACLLLLAGLQLSILVPTEA). Residues 29–565 (NDFSSFLSAN…ITRKPDEVSR (537 aa)) lie on the Extracellular side of the membrane. Asn-38, Asn-205, Asn-294, Asn-305, Asn-432, Asn-475, Asn-499, and Asn-543 each carry an N-linked (GlcNAc...) asparagine glycan. A helical transmembrane segment spans residues 566–586 (IYLFTAPFTVETWFCLMGIIL). The Cytoplasmic portion of the chain corresponds to 587–642 (LTAPTLYAINRLAPLKEMRIVGLSTVKSCFWYIFGALLQQGGMYLPTADSGRLVVG). The chain crosses the membrane as a helical span at residues 643 to 663 (FWWIVVIVLVTTYCGNLVAFL). Topologically, residues 664–832 (TFPKFQPGVD…HKVNMDDMQG (169 aa)) are extracellular. Asn-691 is a glycosylation site (N-linked (GlcNAc...) asparagine). A helical membrane pass occupies residues 833–853 (CFLVLLLGFTLALLIVCGEFW). Residues 854-868 (YRRFRASRKRRQFTN) are Cytoplasmic-facing.

It belongs to the glutamate-gated ion channel (TC 1.A.10.1) family. As to expression, in the antenna, detected in sacculus neurons which innervate the first and second chambers (at protein level). Expressed in multiple cells of the larval dorsal organ ganglion, including the dorsal organ cool cells where it is predominately localized to the dendritic bulbs (at protein level).

It is found in the cell membrane. Integral part of various neural sensory systems in the antenna that provide the neural basis for the response to environmental changes in temperature (thermosensation) and humidity (hygrosensation). Together with Ir21a and Ir25a, mediates the response of the larval dorsal organ cool cells, a trio of cool-responsive neurons, to cooling and is required for cool avoidance behavior. Together with Ir25a and Ir40a, mediates the response of the hydrosensory sacculus neurons to changes in relative humidity, and is required for dry detection and humidiy preference behavior. The protein is Ionotropic receptor 93a of Drosophila melanogaster (Fruit fly).